Consider the following 387-residue polypeptide: Patatin-13 (387 aa).

Residues 1–23 (MATTKSVLVLIFMILATTSSTFA) form the signal peptide. One can recognise a PNPLA domain in the interval 32–230 (LSVDGGGIKG…TVADPALLSV (199 aa)). A GXGXXG motif is present at residues 36–41 (GGGIKG). Residues 75–79 (GTSTG) carry the GXSXG motif. Catalysis depends on S77, which acts as the Nucleophile. 2 N-linked (GlcNAc...) asparagine glycosylation sites follow: N115 and N203. D216 serves as the catalytic Proton acceptor. Positions 216 to 218 (DGA) match the DGA/G motif. Residues 361–385 (ETYEEALKRFAKLLSDRKKLRANKA) are a coiled coil.

The protein belongs to the patatin family. Tuber.

Its subcellular location is the vacuole. In terms of biological role, probable lipolytic acyl hydrolase (LAH), an activity which is thought to be involved in the response of tubers to pathogens. This Solanum tuberosum (Potato) protein is Patatin-13.